The primary structure comprises 558 residues: Inositol-3-phosphate synthase (558 aa).

The interval 1-34 (MSPTALDACDHHDSFSLPAQDQSKVHPSARRTPE) is disordered. NAD(+)-binding residues include Gly99, Gly100, Asn101, Asn102, Asp174, Ser210, Ile211, Gln221, Arg224, Thr262, Ala263, Asn264, Thr265, Gly313, Ser314, Asp338, Ser341, Asn372, Asn373, Asp374, Lys387, Gly439, Asp440, Asp468, and Ser469.

The protein belongs to the myo-inositol 1-phosphate synthase family. In terms of assembly, homotetramer. NAD(+) serves as cofactor.

The protein localises to the cytoplasm. The catalysed reaction is D-glucose 6-phosphate = 1D-myo-inositol 3-phosphate. The protein operates within polyol metabolism; myo-inositol biosynthesis; myo-inositol from D-glucose 6-phosphate: step 1/2. Key enzyme in myo-inositol biosynthesis pathway that catalyzes the conversion of glucose 6-phosphate to 1-myo-inositol 1-phosphate in a NAD-dependent manner. Rate-limiting enzyme in the synthesis of all inositol-containing compounds. This chain is Inositol-3-phosphate synthase, found in Cryptococcus neoformans var. grubii serotype A (strain H99 / ATCC 208821 / CBS 10515 / FGSC 9487) (Filobasidiella neoformans var. grubii).